Reading from the N-terminus, the 112-residue chain is Large ribosomal subunit protein uL22 (112 aa).

It belongs to the universal ribosomal protein uL22 family. In terms of assembly, part of the 50S ribosomal subunit.

Functionally, this protein binds specifically to 23S rRNA; its binding is stimulated by other ribosomal proteins, e.g. L4, L17, and L20. It is important during the early stages of 50S assembly. It makes multiple contacts with different domains of the 23S rRNA in the assembled 50S subunit and ribosome. The globular domain of the protein is located near the polypeptide exit tunnel on the outside of the subunit, while an extended beta-hairpin is found that lines the wall of the exit tunnel in the center of the 70S ribosome. This is Large ribosomal subunit protein uL22 from Sulfurovum sp. (strain NBC37-1).